A 435-amino-acid polypeptide reads, in one-letter code: Putative dimethyl sulfoxide reductase membrane subunit C (435 aa).

Helical transmembrane passes span 22-42 (GWLG…AYQL), 57-77 (WGLY…GLIL), 95-115 (LGVL…LPDI), 135-155 (VWDF…LWLL), 186-206 (FWTA…TGWI), 220-240 (LVAP…LLVV), 257-277 (LTSL…YLLA), 281-301 (LPHA…FLIG), 304-324 (VYFW…LATP), 333-353 (IFTA…RLVF), and 392-412 (VEIA…MAGL).

The protein belongs to the NrfD family. Probable multiprotein complex that likely consists of DmsA, DmsB and DmsC.

The protein resides in the cell membrane. In terms of biological role, dimethyl sulfoxide (DMSO) reductase catalyzes the reduction of dimethyl sulfoxide (DMSO) to dimethyl sulfide (DMS) during anaerobic respiration; it can also use trimethylamine N-oxide (TMAO) as terminal electron acceptor. Subunit C is proposed to be a membrane anchoring subunit. In Halobacterium salinarum (strain ATCC 700922 / JCM 11081 / NRC-1) (Halobacterium halobium), this protein is Putative dimethyl sulfoxide reductase membrane subunit C (dmsC).